Reading from the N-terminus, the 136-residue chain is MSRHQKPTGQSESPRKLRVGELVRHAVAEILAQGGVHDPVLETHLITVPEVRMSPDLKLATVYVMPLGGRDEKLVIAALEQHKRFLRGEVARRVNLKYAPEIRFRIDERFAEAERIEKLLRTPAVQKDLEPDSDQD.

The protein belongs to the RbfA family. Monomer. Binds 30S ribosomal subunits, but not 50S ribosomal subunits or 70S ribosomes.

It is found in the cytoplasm. One of several proteins that assist in the late maturation steps of the functional core of the 30S ribosomal subunit. Associates with free 30S ribosomal subunits (but not with 30S subunits that are part of 70S ribosomes or polysomes). Required for efficient processing of 16S rRNA. May interact with the 5'-terminal helix region of 16S rRNA. This is Ribosome-binding factor A from Rhodopseudomonas palustris (strain BisB5).